We begin with the raw amino-acid sequence, 144 residues long: Large ribosomal subunit protein uL13 (144 aa).

Belongs to the universal ribosomal protein uL13 family. Part of the 50S ribosomal subunit.

In terms of biological role, this protein is one of the early assembly proteins of the 50S ribosomal subunit, although it is not seen to bind rRNA by itself. It is important during the early stages of 50S assembly. This Nitrosomonas europaea (strain ATCC 19718 / CIP 103999 / KCTC 2705 / NBRC 14298) protein is Large ribosomal subunit protein uL13.